Consider the following 442-residue polypeptide: UPF0489 protein C5orf22 homolog (442 aa).

The interval 175-208 (SSAKKPKLALEDSRNTASTNCDSSSEGLEKDTAT) is disordered. Residues 189 to 200 (NTASTNCDSSSE) are compositionally biased toward polar residues.

The protein belongs to the UPF0489 family.

This is UPF0489 protein C5orf22 homolog from Pongo abelii (Sumatran orangutan).